Consider the following 162-residue polypeptide: Peptidyl-prolyl cis-trans isomerase-like 1 (162 aa).

A PPIase cyclophilin-type domain is found at 1–155 (MTTNIVLETT…EEVKIVKARV (155 aa)).

Belongs to the cyclophilin-type PPIase family. PPIL1 subfamily.

It catalyses the reaction [protein]-peptidylproline (omega=180) = [protein]-peptidylproline (omega=0). PPIases accelerate the folding of proteins. It catalyzes the cis-trans isomerization of proline imidic peptide bonds in oligopeptides. The chain is Peptidyl-prolyl cis-trans isomerase-like 1 (CYP1) from Gibberella zeae (strain ATCC MYA-4620 / CBS 123657 / FGSC 9075 / NRRL 31084 / PH-1) (Wheat head blight fungus).